Here is a 639-residue protein sequence, read N- to C-terminus: tRNA (uracil(54)-C(5))-methyltransferase (639 aa).

Residues 78–113 (VPPTMKHTVDNKRLSSPLTDSGNRRTKKPKLRKYKA) are disordered. Phosphoserine occurs at positions 92 and 93. The span at 101–113 (RRTKKPKLRKYKA) shows a compositional bias: basic residues. In terms of domain architecture, TRAM spans 163–228 (LQYHREVKNV…PYYVESDLLD (66 aa)). S-adenosyl-L-methionine-binding residues include Gln461, Tyr496, Glu517, and Asp564. Cys591 functions as the Nucleophile in the catalytic mechanism. Catalysis depends on Glu631, which acts as the Proton acceptor.

The protein belongs to the class I-like SAM-binding methyltransferase superfamily. RNA M5U methyltransferase family.

The catalysed reaction is uridine(54) in tRNA + S-adenosyl-L-methionine = 5-methyluridine(54) in tRNA + S-adenosyl-L-homocysteine + H(+). Functionally, catalyzes the formation of 5-methyl-uridine at position 54 (m5U54) in all tRNA. May also have a role in tRNA stabilization or maturation. This Saccharomyces cerevisiae (strain ATCC 204508 / S288c) (Baker's yeast) protein is tRNA (uracil(54)-C(5))-methyltransferase (TRM2).